The sequence spans 322 residues: Ribosomal RNA small subunit methyltransferase H (322 aa).

Residues 40-42 (GGH), Asp60, Phe84, Asp106, and Gln113 contribute to the S-adenosyl-L-methionine site.

Belongs to the methyltransferase superfamily. RsmH family.

It localises to the cytoplasm. The catalysed reaction is cytidine(1402) in 16S rRNA + S-adenosyl-L-methionine = N(4)-methylcytidine(1402) in 16S rRNA + S-adenosyl-L-homocysteine + H(+). Specifically methylates the N4 position of cytidine in position 1402 (C1402) of 16S rRNA. The protein is Ribosomal RNA small subunit methyltransferase H of Mannheimia succiniciproducens (strain KCTC 0769BP / MBEL55E).